We begin with the raw amino-acid sequence, 310 residues long: Olfactory receptor 2A4 (310 aa).

Topologically, residues 1–24 (MGDNITSIREFLLLGFPVGPRIQM) are extracellular. N-linked (GlcNAc...) asparagine glycosylation is present at Asn4. Residues 25–48 (LLFGLFSLFYVFTLLGNGTILGLI) traverse the membrane as a helical segment. At 49–56 (SLDSRLHA) the chain is on the cytoplasmic side. A helical membrane pass occupies residues 57-78 (PMYFFLSHLAVVDIAYACNTVP). Over 79–99 (RMLVNLLHPAKPISFAGRMMQ) the chain is Extracellular. The chain crosses the membrane as a helical span at residues 100 to 119 (TFLFSTFAVTECLLLVVMSY). Residues 120 to 138 (DLYVAICHPLRYLAIMTWR) are Cytoplasmic-facing. Residues 139–157 (VCITLAVTSWTTGVLLSLI) form a helical membrane-spanning segment. Over 158–194 (HLVLLLPLPFCRPQKIYHFFCEILAVLKLACADTHIN) the chain is Extracellular. A helical transmembrane segment spans residues 195 to 218 (ENMVLAGAISGLVGPLSTIVVSYM). Over 219–235 (CILCAILQIQSREVQRK) the chain is Cytoplasmic. The helical transmembrane segment at 236 to 258 (AFRTCFSHLCVIGLVYGTAIIMY) threads the bilayer. Over 259–271 (VGPRYGNPKEQKK) the chain is Extracellular. The chain crosses the membrane as a helical span at residues 272 to 291 (YLLLFHSLFNPMLNPLICSL). The Cytoplasmic segment spans residues 292-310 (RNSEVKNTLKRVLGVERAL).

Belongs to the G-protein coupled receptor 1 family.

The protein resides in the cell membrane. Its function is as follows. Odorant receptor. The polypeptide is Olfactory receptor 2A4 (OR2A4) (Homo sapiens (Human)).